We begin with the raw amino-acid sequence, 105 residues long: Large ribosomal subunit protein uL18c (105 aa).

The protein belongs to the universal ribosomal protein uL18 family. As to quaternary structure, part of the 50S ribosomal subunit; contacts the 5S rRNA.

The protein localises to the plastid. It is found in the chloroplast. Its function is as follows. Binds 5S rRNA, forms part of the central protuberance of the 50S subunit. The polypeptide is Large ribosomal subunit protein uL18c (rpl18) (Cyanidium caldarium (Red alga)).